Here is a 466-residue protein sequence, read N- to C-terminus: UDP-N-acetylmuramoylalanine--D-glutamate ligase (466 aa).

Residue glycine 127–threonine 133 participates in ATP binding.

The protein belongs to the MurCDEF family.

The protein localises to the cytoplasm. The enzyme catalyses UDP-N-acetyl-alpha-D-muramoyl-L-alanine + D-glutamate + ATP = UDP-N-acetyl-alpha-D-muramoyl-L-alanyl-D-glutamate + ADP + phosphate + H(+). The protein operates within cell wall biogenesis; peptidoglycan biosynthesis. Its function is as follows. Cell wall formation. Catalyzes the addition of glutamate to the nucleotide precursor UDP-N-acetylmuramoyl-L-alanine (UMA). In Ruegeria pomeroyi (strain ATCC 700808 / DSM 15171 / DSS-3) (Silicibacter pomeroyi), this protein is UDP-N-acetylmuramoylalanine--D-glutamate ligase.